A 427-amino-acid polypeptide reads, in one-letter code: Glutamate-1-semialdehyde 2,1-aminomutase 1 (427 aa).

Lys-267 carries the post-translational modification N6-(pyridoxal phosphate)lysine.

It belongs to the class-III pyridoxal-phosphate-dependent aminotransferase family. HemL subfamily. In terms of assembly, homodimer. It depends on pyridoxal 5'-phosphate as a cofactor.

It localises to the cytoplasm. It carries out the reaction (S)-4-amino-5-oxopentanoate = 5-aminolevulinate. The protein operates within porphyrin-containing compound metabolism; protoporphyrin-IX biosynthesis; 5-aminolevulinate from L-glutamyl-tRNA(Glu): step 2/2. This is Glutamate-1-semialdehyde 2,1-aminomutase 1 from Macrococcus caseolyticus (strain JCSC5402) (Macrococcoides caseolyticum).